The chain runs to 482 residues: Potential E3 ubiquitin-protein ligase ariadne-2 (482 aa).

Residues 125–334 (AKGYCSVCAM…SEYYECSRYK (210 aa)) form a TRIAD supradomain region. Residues Cys-129, Cys-132, Cys-145, His-147, Cys-150, Cys-153, Cys-172, Cys-177, Cys-218, Cys-223, Cys-239, Cys-242, Cys-247, Cys-250, His-255, Cys-260, Cys-287, and Cys-290 each contribute to the Zn(2+) site. The segment at 129 to 177 (CSVCAMDGYTELPHLTCGHCFCEHCWKSHVESRLSEGVASRIECMESEC) adopts an RING-type 1 zinc-finger fold. The IBR-type zinc-finger motif lies at 198–260 (LKYERFLLRD…GADYHAPTSC (63 aa)). The RING-type 2; atypical zinc finger occupies 287–316 (CPQCHSCIEKAGGCNHIQCTRCRHHFCWMC). Residue Cys-300 is part of the active site. Residues Cys-305, Cys-308, Cys-313, Cys-316, His-323, and Cys-330 each coordinate Zn(2+). Positions 433–459 (FEYQQAQLEKEVEELAWAVERADGTAR) form a coiled coil.

This sequence belongs to the RBR family. Ariadne subfamily.

The protein resides in the nucleus. The catalysed reaction is [E2 ubiquitin-conjugating enzyme]-S-ubiquitinyl-L-cysteine + [acceptor protein]-L-lysine = [E2 ubiquitin-conjugating enzyme]-L-cysteine + [acceptor protein]-N(6)-ubiquitinyl-L-lysine.. In terms of biological role, might act as an E3 ubiquitin-protein ligase, or as part of E3 complex, which accepts ubiquitin from specific E2 ubiquitin-conjugating enzymes, such as UBC-2/UBE2L3, and then transfers it to substrates. The polypeptide is Potential E3 ubiquitin-protein ligase ariadne-2 (Caenorhabditis elegans).